Reading from the N-terminus, the 186-residue chain is MRELDAINLTLEALGESRVMDINTSNPSAGLARSALARNRRGLLSTGFWFNVVEREVTPTADGFIKVPWNQLAVYDAGSDSKYGVRDGNLYDLMEQNQYFDSPVKLKIVLDLDFEDLPEHAAMWVANYTTAQVYLNDLGGDSNYANYAQEAERYKSMVLREHLRNQRFSTSKTRFARRIRRARFMV.

The protein belongs to the tail tubular protein gp11 family.

Its subcellular location is the virion. The enzyme catalyses alpha,alpha-trehalose + H2O = alpha-D-glucose + beta-D-glucose. Functionally, structural component of the tail, which functions as a receptor binding protein (RBP) and mediates the attachment to the host capsular exopolysaccharides. Displays a depolymerase activity that specifically degrades the polysaccharides of Klebsiella pneumoniae capsule, which allows the phage to reach the host cell membrane and bind the entry receptor. Hydrolyzes trehalose. This is Tail tubular protein A from Klebsiella phage KP34 (Bacteriophage KP34).